Reading from the N-terminus, the 123-residue chain is Large ribosomal subunit protein uL14 (123 aa).

The protein belongs to the universal ribosomal protein uL14 family. Part of the 50S ribosomal subunit. Forms a cluster with proteins L3 and L19. In the 70S ribosome, L14 and L19 interact and together make contacts with the 16S rRNA in bridges B5 and B8.

In terms of biological role, binds to 23S rRNA. Forms part of two intersubunit bridges in the 70S ribosome. This Photobacterium profundum (strain SS9) protein is Large ribosomal subunit protein uL14.